Here is a 469-residue protein sequence, read N- to C-terminus: Programmed cell death protein 4 (469 aa).

M1 carries the post-translational modification N-acetylmethionine. 2 disordered regions span residues 1–30 and 58–128; these read MDVE…DEEN and KAKR…GTPG. The segment covering 7–23 has biased composition (polar residues); that stretch reads QILNVNPTDPDNLSDSL. S25 bears the Phosphoserine mark. Positions 58-64 match the Nuclear localization signal motif; that stretch reads KAKRRLR. S67 carries the phosphoserine; by PKB and RPS6KB1 modification. Residues S68, S71, S76, S78, and S94 each carry the phosphoserine modification. Positions 70-76 match the Phosphodegron motif; that stretch reads DSGRGDS. The segment covering 114 to 125 has biased composition (gly residues); sequence KKGGAGGKGVWG. Y152 carries the phosphotyrosine modification. In terms of domain architecture, MI 1 spans 163-284; it reads AFEKTLTPII…CNTYIDSYKG (122 aa). S313 and S317 each carry phosphoserine. Positions 326-449 constitute an MI 2 domain; it reads HLVKEIDMLL…SKQLRDLCPS (124 aa). A Nuclear localization signal motif is present at residues 448–454; the sequence is PSRGRKR. S457 is subject to Phosphoserine.

Belongs to the PDCD4 family. As to quaternary structure, interacts (via MI domains) with EIF4A2. Interacts (via MI domains) with EIF4A1 (via N-terminal domain). Heterotrimer with EIF4A1; one molecule of PDCD4 binds two molecules of EIF4A1. Interacts with EIF4G1. May form a complex with EIF4A1 and EIF4G1. The interaction between PDCD4 and EIF4A1 interferes with the interaction between EIF4A1 and EIF4G. When phosphorylated, interacts with BTRC and FBXW11. In terms of processing, polyubiquitinated, leading to its proteasomal degradation. Rapidly degraded in response to mitogens. Phosphorylation of the phosphodegron promotes interaction with BTRC and proteasomal degradation. Phosphorylated at Ser-67 by RPS6KB1 in response to mitogens; phosphorylation promotes proteasomal degradation of PDCD4.

It localises to the nucleus. The protein localises to the cytoplasm. Functionally, inhibits translation initiation and cap-dependent translation. May excert its function by hindering the interaction between EIF4A1 and EIF4G. Inhibits the helicase activity of EIF4A. Modulates the activation of JUN kinase. Down-regulates the expression of MAP4K1, thus inhibiting events important in driving invasion, namely, MAPK85 activation and consequent JUN-dependent transcription. May play a role in apoptosis. Tumor suppressor. Inhibits tumor promoter-induced neoplastic transformation. Binds RNA. This is Programmed cell death protein 4 (Pdcd4) from Rattus norvegicus (Rat).